A 394-amino-acid chain; its full sequence is Probable nucleoredoxin 2 (394 aa).

2 Thioredoxin domains span residues 15 to 176 (GVGG…QTLE) and 180 to 327 (SVSG…EMED).

This sequence belongs to the nucleoredoxin family.

The enzyme catalyses [protein]-dithiol + NAD(+) = [protein]-disulfide + NADH + H(+). It carries out the reaction [protein]-dithiol + NADP(+) = [protein]-disulfide + NADPH + H(+). Probable thiol-disulfide oxidoreductase that may participate in various redox reactions. This is Probable nucleoredoxin 2 from Oryza sativa subsp. japonica (Rice).